Here is a 276-residue protein sequence, read N- to C-terminus: Bis(5'-nucleosyl)-tetraphosphatase, symmetrical (276 aa).

Belongs to the Ap4A hydrolase family.

It catalyses the reaction P(1),P(4)-bis(5'-adenosyl) tetraphosphate + H2O = 2 ADP + 2 H(+). Its function is as follows. Hydrolyzes diadenosine 5',5'''-P1,P4-tetraphosphate to yield ADP. In Psychromonas ingrahamii (strain DSM 17664 / CCUG 51855 / 37), this protein is Bis(5'-nucleosyl)-tetraphosphatase, symmetrical.